Consider the following 753-residue polypeptide: CCR4-NOT transcription complex subunit 3 (753 aa).

The tract at residues 240 to 534 (ATSPPSHSHM…PPQFSTAPEI (295 aa)) is disordered. Residues 257–268 (SSSTPTSTTSSS) are compositionally biased toward low complexity. Basic and acidic residues predominate over residues 284–293 (DDKKRGRSTD). Position 292 is a phosphothreonine (Thr-292). A compositionally biased stretch (polar residues) spans 294–315 (SEVSQSPAKNGSKPVHSNQHPQ). Ser-299 is subject to Phosphoserine. The segment covering 317-330 (PAVPPTYPSGPPPA) has biased composition (pro residues). Residues 350-376 (PSALGPKASPAPSHNSGTPAPYAQAVA) show a composition bias toward low complexity. Gly residues predominate over residues 396 to 408 (SGGGGGGSGGGGS). The segment covering 424 to 433 (NGATSYSSVV) has biased composition (polar residues). Low complexity predominate over residues 441 to 457 (ALSSSGGNNASSQALGP). The span at 458–467 (PSGPHNPPPS) shows a compositional bias: pro residues. Residues 479-491 (GAGGVAPGSGNNS) show a composition bias toward gly residues. Ser-542 is modified (phosphoserine). A repressor domain region spans residues 661 to 753 (EFYQRLSTET…YRYLEDRDLQ (93 aa)).

Belongs to the CNOT2/3/5 family. As to quaternary structure, component of the CCR4-NOT complex; distinct complexes seem to exist that differ in the participation of probably mutually exclusive catalytic subunits. In the complex interacts directly with CNOT2. Interacts with TIP120B and NANOS2. Interacts with EBF1. Interacts in an RNA-independent manner with BICC1 (via KH domains). As to expression, ubiquitous. Highly expressed in brain, heart, thymus, spleen, kidney, liver, small intestine, lung and peripheral blood leukocytes.

Its subcellular location is the cytoplasm. It is found in the nucleus. The protein resides in the P-body. In terms of biological role, component of the CCR4-NOT complex which is one of the major cellular mRNA deadenylases and is linked to various cellular processes including bulk mRNA degradation, miRNA-mediated repression, translational repression during translational initiation and general transcription regulation. Additional complex functions may be a consequence of its influence on mRNA expression. May be involved in metabolic regulation; may be involved in recruitment of the CCR4-NOT complex to deadenylation target mRNAs involved in energy metabolism. Involved in mitotic progression and regulation of the spindle assembly checkpoint by regulating the stability of MAD1L1 mRNA. Can repress transcription and may link the CCR4-NOT complex to transcriptional regulation; the repressive function may involve histone deacetylases. Involved in the maintenance of embryonic stem (ES) cell identity. This chain is CCR4-NOT transcription complex subunit 3, found in Homo sapiens (Human).